The following is a 329-amino-acid chain: Cytoplasmic phosphatidylinositol transfer protein 1 (329 aa).

Residues 267–329 (SHGGYSSAPS…GNKPSLAKPE (63 aa)) form a disordered region.

Belongs to the PtdIns transfer protein family. PI transfer class IIB subfamily.

The protein localises to the cytoplasm. The enzyme catalyses a 1,2-diacyl-sn-glycero-3-phospho-(1D-myo-inositol)(in) = a 1,2-diacyl-sn-glycero-3-phospho-(1D-myo-inositol)(out). It carries out the reaction a 1,2-diacyl-sn-glycero-3-phosphate(in) = a 1,2-diacyl-sn-glycero-3-phosphate(out). Catalyzes the transfer of phosphatidylinositol (PI) and phosphatidic acid (PA) between membranes. Binds PA derived from the phospholipase D signaling pathway and among the cellular PA species, preferably binds to the C16:0/16:1 and C16:1/18:1 PA species. This Xenopus tropicalis (Western clawed frog) protein is Cytoplasmic phosphatidylinositol transfer protein 1 (pitpnc1).